We begin with the raw amino-acid sequence, 326 residues long: Tagatose 1,6-diphosphate aldolase (326 aa).

Belongs to the aldolase LacD family.

It catalyses the reaction D-tagatofuranose 1,6-bisphosphate = D-glyceraldehyde 3-phosphate + dihydroxyacetone phosphate. Its pathway is carbohydrate metabolism; D-tagatose 6-phosphate degradation; D-glyceraldehyde 3-phosphate and glycerone phosphate from D-tagatose 6-phosphate: step 2/2. In Staphylococcus aureus (strain MW2), this protein is Tagatose 1,6-diphosphate aldolase.